Here is a 142-residue protein sequence, read N- to C-terminus: Hemoglobin subunit alpha (142 aa).

N-acetylserine is present on S1. The Globin domain occupies 1-142; the sequence is SLSDKDKAAV…VALALAERYR (142 aa). H59 lines the O2 pocket. H88 is a binding site for heme b.

The protein belongs to the globin family. As to quaternary structure, hb1 is a heterotetramer of two alpha chains and two beta chains. HbC is a heterotetramer of two alpha chains and two beta-C chains. In terms of tissue distribution, red blood cells.

Its function is as follows. Involved in oxygen transport from gills to the various peripheral tissues. In Trematomus bernacchii (Emerald rockcod), this protein is Hemoglobin subunit alpha (hba).